We begin with the raw amino-acid sequence, 585 residues long: MNLIEYEAYFWAKFFVAERAVSGVIIILIYLIIASVLAYILSFHIAKIYLDEKTVFSKITGRIISFFERMIGESPDHGMTFKEYFINLLLFNFFAGLISFLVIMFQKYLPFSYDTVGMSPSLDFNTVVSFLTNTNLQHYSNPMRLSYFSQTFVITGLMFLSAGTGFAASMAFVRGIRTDTGNIGNFYHDFLVSIFDLILPLTVILTVILILAGIPETMQRYITVNAFLTNKVYNIPLGPVATLEAIKNIGTNGGGFYGANAAYPFENPDWFTNLVEFVSFVIIPLASLISLGIVFGDRKFGRMLYWVVMFFFIFDALFAFFGEFAGVPFLHLGYYTGNMVGKETAIGISQSTIFAVGATITSTGASNAALVSYTPAGIIGVLIGLLLNDPLGGVGTGVLNIFMYIIFTVFIASLMVGKLPEIMSLRISSKEIKYSTLSLITHPLLVVIPLGITLMIPHLMSSFVNPESSRITELLYEFASAASNNGSEMGGFITNQPFFNYLDGVLMLLGRYLLMAFQLIIAQSFSVKKAKAQYYRSIDTSNWIFGVLLIAAMILIGLLSYFPIIVLGPLLSWAHDFNLILEAMV.

Transmembrane regions (helical) follow at residues 23–43, 85–105, 152–172, 194–214, 275–295, 307–327, 345–365, 367–387, 397–417, 444–464, 502–522, and 547–567; these read GVII…ILSF, FINL…VIMF, FVIT…SMAF, IFDL…LAGI, VEFV…GIVF, VVMF…FAGV, AIGI…STGA, NAAL…GLLL, GVLN…LMVG, LLVV…SSFV, LDGV…LIIA, and VLLI…IIVL.

This sequence belongs to the KdpA family. As to quaternary structure, the system is composed of three essential subunits: KdpA, KdpB and KdpC.

It localises to the cell membrane. Part of the high-affinity ATP-driven potassium transport (or Kdp) system, which catalyzes the hydrolysis of ATP coupled with the electrogenic transport of potassium into the cytoplasm. This subunit binds the extracellular potassium ions and delivers the ions to the membrane domain of KdpB through an intramembrane tunnel. This is Potassium-transporting ATPase potassium-binding subunit from Thermoplasma acidophilum (strain ATCC 25905 / DSM 1728 / JCM 9062 / NBRC 15155 / AMRC-C165).